A 205-amino-acid polypeptide reads, in one-letter code: Holliday junction branch migration complex subunit RuvA (205 aa).

A domain I region spans residues 1–64 (MIGKLKGLID…EDQIKLFGFR (64 aa)). The tract at residues 65–143 (SDLEREWFRL…GFASVDPAVA (79 aa)) is domain II. Residues 144–153 (HLSGAIEERS) form a flexible linker region. The interval 153-205 (SAPRPVADAISALVNLGYGQPQAAAAIAAAARSAGDAAQTAQLIKLGLKELSK) is domain III.

It belongs to the RuvA family. Homotetramer. Forms an RuvA(8)-RuvB(12)-Holliday junction (HJ) complex. HJ DNA is sandwiched between 2 RuvA tetramers; dsDNA enters through RuvA and exits via RuvB. An RuvB hexamer assembles on each DNA strand where it exits the tetramer. Each RuvB hexamer is contacted by two RuvA subunits (via domain III) on 2 adjacent RuvB subunits; this complex drives branch migration. In the full resolvosome a probable DNA-RuvA(4)-RuvB(12)-RuvC(2) complex forms which resolves the HJ.

The protein resides in the cytoplasm. In terms of biological role, the RuvA-RuvB-RuvC complex processes Holliday junction (HJ) DNA during genetic recombination and DNA repair, while the RuvA-RuvB complex plays an important role in the rescue of blocked DNA replication forks via replication fork reversal (RFR). RuvA specifically binds to HJ cruciform DNA, conferring on it an open structure. The RuvB hexamer acts as an ATP-dependent pump, pulling dsDNA into and through the RuvAB complex. HJ branch migration allows RuvC to scan DNA until it finds its consensus sequence, where it cleaves and resolves the cruciform DNA. The chain is Holliday junction branch migration complex subunit RuvA from Rhodopseudomonas palustris (strain BisA53).